A 187-amino-acid chain; its full sequence is UPF0301 protein ETA_28320 (187 aa).

Belongs to the UPF0301 (AlgH) family.

The protein is UPF0301 protein ETA_28320 of Erwinia tasmaniensis (strain DSM 17950 / CFBP 7177 / CIP 109463 / NCPPB 4357 / Et1/99).